We begin with the raw amino-acid sequence, 307 residues long: tRNA pseudouridine synthase B (307 aa).

Residue Asp-48 is the Nucleophile of the active site.

Belongs to the pseudouridine synthase TruB family. Type 1 subfamily.

The catalysed reaction is uridine(55) in tRNA = pseudouridine(55) in tRNA. Its function is as follows. Responsible for synthesis of pseudouridine from uracil-55 in the psi GC loop of transfer RNAs. This chain is tRNA pseudouridine synthase B, found in Pasteurella multocida (strain Pm70).